The chain runs to 103 residues: Small ribosomal subunit protein uS10 (103 aa).

The protein belongs to the universal ribosomal protein uS10 family. Part of the 30S ribosomal subunit.

In terms of biological role, involved in the binding of tRNA to the ribosomes. This is Small ribosomal subunit protein uS10 from Chromohalobacter salexigens (strain ATCC BAA-138 / DSM 3043 / CIP 106854 / NCIMB 13768 / 1H11).